We begin with the raw amino-acid sequence, 988 residues long: UvrABC system protein A (988 aa).

33–40 (GLSGSGKS) contacts ATP. The segment at 255-282 (CPVCDYSLPELEPRLFSFNAPVGACPSC) adopts a C4-type zinc-finger fold. ABC transporter domains lie at 312 to 589 (WDRR…PRSL) and 609 to 938 (PNPK…QFLA). 642-649 (GVSGSGKS) lines the ATP pocket. The segment at 741–767 (CEACQGDGMIKVEMHFLPDVYVPCDVC) adopts a C4-type zinc-finger fold. The interval 948 to 988 (ETRPAAMANKPDARPPRKVKPEKVAKATKTATKKTAKKKAS) is disordered. A compositionally biased stretch (basic and acidic residues) spans 958-972 (PDARPPRKVKPEKVA). Residues 978 to 988 (ATKKTAKKKAS) show a composition bias toward basic residues.

This sequence belongs to the ABC transporter superfamily. UvrA family. In terms of assembly, forms a heterotetramer with UvrB during the search for lesions.

The protein localises to the cytoplasm. The UvrABC repair system catalyzes the recognition and processing of DNA lesions. UvrA is an ATPase and a DNA-binding protein. A damage recognition complex composed of 2 UvrA and 2 UvrB subunits scans DNA for abnormalities. When the presence of a lesion has been verified by UvrB, the UvrA molecules dissociate. The chain is UvrABC system protein A from Xanthomonas campestris pv. campestris (strain ATCC 33913 / DSM 3586 / NCPPB 528 / LMG 568 / P 25).